A 545-amino-acid polypeptide reads, in one-letter code: Chaperonin GroEL (545 aa).

Residues 30–33 (TLGP), K51, 87–91 (DGTTT), G415, and D495 each bind ATP.

Belongs to the chaperonin (HSP60) family. As to quaternary structure, forms a cylinder of 14 subunits composed of two heptameric rings stacked back-to-back. Interacts with the co-chaperonin GroES.

The protein localises to the cytoplasm. It catalyses the reaction ATP + H2O + a folded polypeptide = ADP + phosphate + an unfolded polypeptide.. Functionally, together with its co-chaperonin GroES, plays an essential role in assisting protein folding. The GroEL-GroES system forms a nano-cage that allows encapsulation of the non-native substrate proteins and provides a physical environment optimized to promote and accelerate protein folding. In Shewanella sp. (strain ANA-3), this protein is Chaperonin GroEL.